A 436-amino-acid polypeptide reads, in one-letter code: Trigger factor (436 aa).

A PPIase FKBP-type domain is found at 163–248 (GDRVVLDFAG…VKEVAEGVLP (86 aa)).

The protein belongs to the FKBP-type PPIase family. Tig subfamily.

The protein localises to the cytoplasm. It carries out the reaction [protein]-peptidylproline (omega=180) = [protein]-peptidylproline (omega=0). In terms of biological role, involved in protein export. Acts as a chaperone by maintaining the newly synthesized protein in an open conformation. Functions as a peptidyl-prolyl cis-trans isomerase. In Bordetella pertussis (strain Tohama I / ATCC BAA-589 / NCTC 13251), this protein is Trigger factor.